Reading from the N-terminus, the 91-residue chain is Probable Fe(2+)-trafficking protein (91 aa).

This sequence belongs to the Fe(2+)-trafficking protein family. In terms of assembly, monomer.

Functionally, could be a mediator in iron transactions between iron acquisition and iron-requiring processes, such as synthesis and/or repair of Fe-S clusters in biosynthetic enzymes. The sequence is that of Probable Fe(2+)-trafficking protein from Klebsiella pneumoniae (strain 342).